Consider the following 220-residue polypeptide: Tumor protein p53-inducible nuclear protein 2 (220 aa).

Residues 1 to 12 (MFQRLSSLFFST) are compositionally biased toward low complexity. 3 disordered regions span residues 1–24 (MFQR…CPRA), 41–69 (PDSY…LMDE), and 119–220 (PGSP…QFNY). At S14 the chain carries Phosphoserine. The short motif at 26 to 41 (VSEEDEVDGWLIIDLP) is the LIR element. Residues 47–64 (PPSPGAAPAPAGRPPPAP) are compositionally biased toward pro residues. S136 is modified (phosphoserine). A compositionally biased stretch (low complexity) spans 152–170 (HAAPLPARAALLEKAGQVR). Positions 205 to 220 (NQSSFIYQPCQRQFNY) are enriched in polar residues.

Interacts with VMP1, GABARAP, GABARAPL1, GABARAPL2, MAP1LC3A, MAP1LC3B, MAP1LC3C and THRA.

It localises to the cytoplasm. The protein resides in the cytosol. The protein localises to the nucleus. It is found in the PML body. Its subcellular location is the cytoplasmic vesicle. It localises to the autophagosome. Functionally, dual regulator of transcription and autophagy. Positively regulates autophagy and is required for autophagosome formation and processing. May act as a scaffold protein that recruits MAP1LC3A, GABARAP and GABARAPL2 and brings them to the autophagosome membrane by interacting with VMP1 where, in cooperation with the BECN1-PI3-kinase class III complex, they trigger autophagosome development. Acts as a transcriptional activator of THRA. This is Tumor protein p53-inducible nuclear protein 2 (TP53INP2) from Homo sapiens (Human).